We begin with the raw amino-acid sequence, 899 residues long: Bifunctional uridylyltransferase/uridylyl-removing enzyme (899 aa).

Residues 1–342 (MPQMDPELFD…RAGESGPATP (342 aa)) are uridylyltransferase. A uridylyl-removing region spans residues 343 to 705 (LNSRFQVRDG…TTQREFEGGT (363 aa)). An HD domain is found at 461–583 (VDAHTLNLIK…VGDQTHLDYL (123 aa)). 2 consecutive ACT domains span residues 706-784 (QIFI…DEYP) and 816-897 (ILEL…SLQI).

The protein belongs to the GlnD family. Mg(2+) serves as cofactor.

The enzyme catalyses [protein-PII]-L-tyrosine + UTP = [protein-PII]-uridylyl-L-tyrosine + diphosphate. It carries out the reaction [protein-PII]-uridylyl-L-tyrosine + H2O = [protein-PII]-L-tyrosine + UMP + H(+). Its activity is regulated as follows. Uridylyltransferase (UTase) activity is inhibited by glutamine, while glutamine activates uridylyl-removing (UR) activity. Modifies, by uridylylation and deuridylylation, the PII regulatory proteins (GlnB and homologs), in response to the nitrogen status of the cell that GlnD senses through the glutamine level. Under low glutamine levels, catalyzes the conversion of the PII proteins and UTP to PII-UMP and PPi, while under higher glutamine levels, GlnD hydrolyzes PII-UMP to PII and UMP (deuridylylation). Thus, controls uridylylation state and activity of the PII proteins, and plays an important role in the regulation of nitrogen assimilation and metabolism. In Ectopseudomonas mendocina (strain ymp) (Pseudomonas mendocina), this protein is Bifunctional uridylyltransferase/uridylyl-removing enzyme.